The chain runs to 163 residues: Nucleotide-binding protein Cla_1551 (163 aa).

The protein belongs to the YajQ family.

Functionally, nucleotide-binding protein. The polypeptide is Nucleotide-binding protein Cla_1551 (Campylobacter lari (strain RM2100 / D67 / ATCC BAA-1060)).